Here is a 224-residue protein sequence, read N- to C-terminus: ATP-dependent dethiobiotin synthetase BioD (224 aa).

14–19 (GIGKTV) contacts ATP. Thr18 is a binding site for Mg(2+). Lys39 is an active-site residue. Ser43 is a substrate binding site. Residues Asp56, 117 to 120 (EGVG), and 177 to 178 (NE) contribute to the ATP site. Residues Asp56 and Glu117 each contribute to the Mg(2+) site.

It belongs to the dethiobiotin synthetase family. As to quaternary structure, homodimer. Requires Mg(2+) as cofactor.

It localises to the cytoplasm. It carries out the reaction (7R,8S)-7,8-diammoniononanoate + CO2 + ATP = (4R,5S)-dethiobiotin + ADP + phosphate + 3 H(+). The protein operates within cofactor biosynthesis; biotin biosynthesis; biotin from 7,8-diaminononanoate: step 1/2. Its function is as follows. Catalyzes a mechanistically unusual reaction, the ATP-dependent insertion of CO2 between the N7 and N8 nitrogen atoms of 7,8-diaminopelargonic acid (DAPA, also called 7,8-diammoniononanoate) to form a ureido ring. This is ATP-dependent dethiobiotin synthetase BioD from Xanthomonas campestris pv. campestris (strain 8004).